Consider the following 608-residue polypeptide: Granule-bound starch synthase 1, chloroplastic/amyloplastic (608 aa).

The N-terminal 78 residues, 1–78 (MATVIAAHFV…NGRPAAKIIC (78 aa)), are a transit peptide targeting the chloroplast. K96 lines the ADP-alpha-D-glucose pocket. Positions 587–608 (GSEPGTEGEEIAPLAKENVPTP) are disordered.

The protein belongs to the glycosyltransferase 1 family. Bacterial/plant glycogen synthase subfamily. As to expression, synthesized in a number of different organs, but most abundantly in tubers.

The protein localises to the plastid. It localises to the chloroplast. The protein resides in the amyloplast. The catalysed reaction is an NDP-alpha-D-glucose + [(1-&gt;4)-alpha-D-glucosyl](n) = [(1-&gt;4)-alpha-D-glucosyl](n+1) + a ribonucleoside 5'-diphosphate + H(+). It participates in glycan biosynthesis; starch biosynthesis. Responsible for the synthesis of amylose in reserve starch. The sequence is that of Granule-bound starch synthase 1, chloroplastic/amyloplastic (WAXY) from Manihot esculenta (Cassava).